The sequence spans 208 residues: Large ribosomal subunit protein bL25 (208 aa).

A disordered region spans residues 184-208 (VTISGTSSDQDTSGGESSGTTTSED). Residues 187–208 (SGTSSDQDTSGGESSGTTTSED) are compositionally biased toward low complexity.

Belongs to the bacterial ribosomal protein bL25 family. CTC subfamily. Part of the 50S ribosomal subunit; part of the 5S rRNA/L5/L18/L25 subcomplex. Contacts the 5S rRNA. Binds to the 5S rRNA independently of L5 and L18.

Its function is as follows. This is one of the proteins that binds to the 5S RNA in the ribosome where it forms part of the central protuberance. This chain is Large ribosomal subunit protein bL25, found in Ehrlichia ruminantium (strain Gardel).